The chain runs to 151 residues: Prefoldin subunit alpha (151 aa).

The protein belongs to the prefoldin subunit alpha family. In terms of assembly, heterohexamer of two alpha and four beta subunits.

It is found in the cytoplasm. Functionally, molecular chaperone capable of stabilizing a range of proteins. Seems to fulfill an ATP-independent, HSP70-like function in archaeal de novo protein folding. The sequence is that of Prefoldin subunit alpha from Sulfurisphaera tokodaii (strain DSM 16993 / JCM 10545 / NBRC 100140 / 7) (Sulfolobus tokodaii).